Reading from the N-terminus, the 311-residue chain is MSVTVQMLVDKVKLDVIYGTQELLQKEIATADISRPGLEMTGYFDYYAPERIQLLGMKEWSYLTQMTSHNRYSVLKEMFQTETPAIIVARDLTIPEEMLLAAKEEGIAVLQSHVPTSRLSGEMSWYLDSCLAERTSVHGVLMDIYGMGVLIQGDSGIGKSETGLELVKRGHRLVADDRVDVFAKDEETLWGEPAEILRHLLEIRGVGIINVMSLYGASAVKDSSQVQLSIFLENFEKDKMFDRLGNGNEDIELSGVKIPRIRIPVKTGRNVSVVIEAAAMNYRAKQMGYDATETFEKRLTNLIDQNEASHD.

Active-site residues include histidine 138 and lysine 159. 153–160 is a binding site for ATP; the sequence is GDSGIGKS. Serine 160 is a binding site for Mg(2+). Catalysis depends on aspartate 177, which acts as the Proton acceptor; for phosphorylation activity. Proton donor; for dephosphorylation activity. The important for the catalytic mechanism of both phosphorylation and dephosphorylation stretch occupies residues 201-210; it reads LEIRGVGIIN. Glutamate 202 is a binding site for Mg(2+). Arginine 243 is an active-site residue. An important for the catalytic mechanism of dephosphorylation region spans residues 264–269; the sequence is PVKTGR.

Belongs to the HPrK/P family. As to quaternary structure, homohexamer. The cofactor is Mg(2+).

It catalyses the reaction [HPr protein]-L-serine + ATP = [HPr protein]-O-phospho-L-serine + ADP + H(+). It carries out the reaction [HPr protein]-O-phospho-L-serine + phosphate + H(+) = [HPr protein]-L-serine + diphosphate. Its function is as follows. Catalyzes the ATP- as well as the pyrophosphate-dependent phosphorylation of a specific serine residue in HPr, a phosphocarrier protein of the phosphoenolpyruvate-dependent sugar phosphotransferase system (PTS). HprK/P also catalyzes the pyrophosphate-producing, inorganic phosphate-dependent dephosphorylation (phosphorolysis) of seryl-phosphorylated HPr (P-Ser-HPr). The two antagonistic activities of HprK/P are regulated by several intracellular metabolites, which change their concentration in response to the absence or presence of rapidly metabolisable carbon sources (glucose, fructose, etc.) in the growth medium. Therefore, by controlling the phosphorylation state of HPr, HPrK/P is a sensor enzyme that plays a major role in the regulation of carbon metabolism and sugar transport: it mediates carbon catabolite repression (CCR), and regulates PTS-catalyzed carbohydrate uptake and inducer exclusion. The chain is HPr kinase/phosphorylase (hprK) from Streptococcus mutans serotype c (strain ATCC 700610 / UA159).